The primary structure comprises 179 residues: ATP synthase subunit delta (179 aa).

The protein belongs to the ATPase delta chain family. In terms of assembly, F-type ATPases have 2 components, F(1) - the catalytic core - and F(0) - the membrane proton channel. F(1) has five subunits: alpha(3), beta(3), gamma(1), delta(1), epsilon(1). F(0) has three main subunits: a(1), b(2) and c(10-14). The alpha and beta chains form an alternating ring which encloses part of the gamma chain. F(1) is attached to F(0) by a central stalk formed by the gamma and epsilon chains, while a peripheral stalk is formed by the delta and b chains.

It localises to the cell inner membrane. Its function is as follows. F(1)F(0) ATP synthase produces ATP from ADP in the presence of a proton or sodium gradient. F-type ATPases consist of two structural domains, F(1) containing the extramembraneous catalytic core and F(0) containing the membrane proton channel, linked together by a central stalk and a peripheral stalk. During catalysis, ATP synthesis in the catalytic domain of F(1) is coupled via a rotary mechanism of the central stalk subunits to proton translocation. This protein is part of the stalk that links CF(0) to CF(1). It either transmits conformational changes from CF(0) to CF(1) or is implicated in proton conduction. The polypeptide is ATP synthase subunit delta (Anaeromyxobacter dehalogenans (strain 2CP-1 / ATCC BAA-258)).